The chain runs to 228 residues: Superoxide dismutase [Mn], mitochondrial (228 aa).

A mitochondrion-targeting transit peptide spans 1–24 (MALRTLVSRRTLATGLGFRQQLRG). Mn(2+)-binding residues include His-52, His-100, Asp-189, and His-193.

It belongs to the iron/manganese superoxide dismutase family. In terms of assembly, homotetramer. It depends on Mn(2+) as a cofactor.

Its subcellular location is the mitochondrion matrix. The catalysed reaction is 2 superoxide + 2 H(+) = H2O2 + O2. Its function is as follows. Destroys superoxide anion radicals which are normally produced within the cells and which are toxic to biological systems. This is Superoxide dismutase [Mn], mitochondrial (SODA) from Nicotiana plumbaginifolia (Leadwort-leaved tobacco).